We begin with the raw amino-acid sequence, 424 residues long: uncharacterized protein (424 aa).

Position 259 is an N6-(pyridoxal phosphate)lysine (Lys259).

It belongs to the class-III pyridoxal-phosphate-dependent aminotransferase family. It depends on pyridoxal 5'-phosphate as a cofactor.

This is an uncharacterized protein from Archaeoglobus fulgidus (strain ATCC 49558 / DSM 4304 / JCM 9628 / NBRC 100126 / VC-16).